The primary structure comprises 676 residues: Protein cereblon (676 aa).

The span at 1–11 shows a compositional bias: acidic residues; the sequence is MDDEETAEIDE. 3 disordered regions span residues 1–78, 118–194, and 249–276; these read MDDE…TTAH, EDAG…AVPR, and DDANNADVINTVPDDTSEASPPPPLDVD. 2 stretches are compositionally biased toward low complexity: residues 12–33 and 125–139; these read TSSSSTNTNTNATAMATATETA and VPQNPTVATNTTPPA. Polar residues predominate over residues 156-177; the sequence is LVNNDSPSQASISSRHSGSDMS. One can recognise a Lon N-terminal domain in the interval 314-542; it reads RMLIFMHQHI…IIGTTLKHES (229 aa). In terms of domain architecture, CULT spans 541–650; the sequence is ESLFYCRYCN…LAGSSVRIGK (110 aa). Zn(2+)-binding residues include Cys-546, Cys-549, Cys-615, and Cys-618.

Belongs to the CRBN family. As to quaternary structure, likely a component of a DCX (DDB1-CUL4-X-box) protein ligase complex. May interact with pic/DDB1. Ubiquitinated.

It localises to the nucleus. The protein operates within protein modification; protein ubiquitination. Its function is as follows. Substrate recognition component of a DCX (DDB1-CUL4-X-box) E3 protein ligase complex that mediates the ubiquitination and subsequent proteasomal degradation of target proteins. Has an essential role in mediating growth by negatively regulating insulin signaling. It also has a role in maintaining presynaptic function in the neuromuscular junction synapses of third-instar larvae. The chain is Protein cereblon from Drosophila mojavensis (Fruit fly).